The chain runs to 252 residues: Protein PYRAB15930 (252 aa).

The protein belongs to the CinA family.

The chain is Protein PYRAB15930 from Pyrococcus abyssi (strain GE5 / Orsay).